The following is a 457-amino-acid chain: uncharacterized protein (457 aa).

12 helical membrane passes run 18–38 (VMTV…PYLV), 44–64 (GAYV…MILV), 101–121 (MGLL…GWVI), 158–178 (IIFY…KGII), 188–208 (LMPL…TLPG), 228–248 (LFIF…GVLI), 273–293 (IIAV…GIEP), 294–314 (NAGP…LWAG), 316–336 (FFAI…SITI), 355–375 (AIVL…ILGD), 396–416 (SGNI…GFVL), and 433–453 (IKIW…VIFI).

It belongs to the sodium:neurotransmitter symporter (SNF) (TC 2.A.22) family.

The protein resides in the cell membrane. Functionally, putative sodium-dependent transporter. This is an uncharacterized protein from Haemophilus influenzae (strain ATCC 51907 / DSM 11121 / KW20 / Rd).